The chain runs to 566 residues: E3 ubiquitin-protein ligase RNF220 (566 aa).

Lys-277 is covalently cross-linked (Glycyl lysine isopeptide (Lys-Gly) (interchain with G-Cter in SUMO2)). A disordered region spans residues 277 to 297 (KREGESPTASPHSSATDDLHH). Ser-390 is subject to Phosphoserine. Positions 485-513 (EDSAVTTFEALKARVRELERQLSRGDRYK) form a coiled coil. Residues 514–522 (CLICMDSYS) form a required for targeting to the cytoplasm region. The RING-type zinc-finger motif lies at 514–553 (CLICMDSYSMPLTSIQCWHVHCEECWLRTLGAKKLCPQCN).

Interacts with SIN3B. Interacts with CTNNB1 (via Armadillo repeats 2-8). Interacts with USP7 (via MATH domain). Auto-ubiquitinated; leads to proteasomal degradation. Ubiquitously expressed. Abundant in brain and spinal cord, particularly in the cerebellum and cerebral cortex. In fetal tissues expressed in the cerebellum, spinal cord and cortex.

The protein localises to the cytoplasm. The protein resides in the nucleus. The enzyme catalyses S-ubiquitinyl-[E2 ubiquitin-conjugating enzyme]-L-cysteine + [acceptor protein]-L-lysine = [E2 ubiquitin-conjugating enzyme]-L-cysteine + N(6)-ubiquitinyl-[acceptor protein]-L-lysine.. It participates in protein modification; protein ubiquitination. Functionally, E3 ubiquitin-protein ligase that promotes the ubiquitination and proteasomal degradation of SIN3B. Independently of its E3 ligase activity, acts as a CTNNB1 stabilizer through USP7-mediated deubiquitination of CTNNB1 promoting Wnt signaling. Plays a critical role in the regulation of nuclear lamina. The chain is E3 ubiquitin-protein ligase RNF220 (RNF220) from Homo sapiens (Human).